Reading from the N-terminus, the 44-residue chain is Photosystem I reaction center subunit IX (44 aa).

A helical membrane pass occupies residues 9-29 (FIRSAPVVAAVWLSLTAGIII).

The protein belongs to the PsaJ family.

The protein resides in the cellular thylakoid membrane. Functionally, may help in the organization of the PsaE and PsaF subunits. The polypeptide is Photosystem I reaction center subunit IX (Prochlorococcus marinus subsp. pastoris (strain CCMP1986 / NIES-2087 / MED4)).